A 597-amino-acid chain; its full sequence is Putative Xaa-Pro dipeptidyl-peptidase (597 aa).

Residues serine 224, aspartate 336, and histidine 367 each act as charge relay system in the active site.

Belongs to the peptidase S15 family.

It carries out the reaction Hydrolyzes Xaa-Pro-|- bonds to release unblocked, N-terminal dipeptides from substrates including Ala-Pro-|-p-nitroanilide and (sequentially) Tyr-Pro-|-Phe-Pro-|-Gly-Pro-|-Ile.. This Bacillus anthracis protein is Putative Xaa-Pro dipeptidyl-peptidase.